The chain runs to 119 residues: Putative membrane protein insertion efficiency factor (119 aa).

Residues 82 to 119 (NALRGEKGGESAADVPSGGSVSEPPGPAAETSPNAQGA) form a disordered region.

This sequence belongs to the UPF0161 family.

The protein localises to the cell membrane. Its function is as follows. Could be involved in insertion of integral membrane proteins into the membrane. The polypeptide is Putative membrane protein insertion efficiency factor (Streptomyces griseus subsp. griseus (strain JCM 4626 / CBS 651.72 / NBRC 13350 / KCC S-0626 / ISP 5235)).